The chain runs to 282 residues: Pantothenate synthetase (282 aa).

Position 30–37 (30–37 (MGYLHEGH)) interacts with ATP. Residue His-37 is the Proton donor of the active site. Position 61 (Gln-61) interacts with (R)-pantoate. Gln-61 is a binding site for beta-alanine. Residue 147-150 (GMKD) coordinates ATP. Position 153 (Gln-153) interacts with (R)-pantoate. ATP contacts are provided by residues Val-176 and 184 to 187 (KSSR).

Belongs to the pantothenate synthetase family. As to quaternary structure, homodimer.

It localises to the cytoplasm. The catalysed reaction is (R)-pantoate + beta-alanine + ATP = (R)-pantothenate + AMP + diphosphate + H(+). Its pathway is cofactor biosynthesis; (R)-pantothenate biosynthesis; (R)-pantothenate from (R)-pantoate and beta-alanine: step 1/1. Its function is as follows. Catalyzes the condensation of pantoate with beta-alanine in an ATP-dependent reaction via a pantoyl-adenylate intermediate. This chain is Pantothenate synthetase, found in Bacillus cereus (strain ATCC 10987 / NRS 248).